Here is a 107-residue protein sequence, read N- to C-terminus: uncharacterized protein (107 aa).

This is an uncharacterized protein from Escherichia coli (strain K12).